A 532-amino-acid polypeptide reads, in one-letter code: Phosphoenolpyruvate carboxykinase (ATP) (532 aa).

3 residues coordinate substrate: arginine 60, tyrosine 194, and lysine 200. ATP is bound by residues lysine 200, histidine 219, and 237-245 (GLSGTGKTT). Mn(2+)-binding residues include lysine 200 and histidine 219. Aspartate 258 provides a ligand contact to Mn(2+). ATP is bound by residues glutamate 286, arginine 324, and threonine 449. A substrate-binding site is contributed by arginine 324.

This sequence belongs to the phosphoenolpyruvate carboxykinase (ATP) family. It depends on Mn(2+) as a cofactor.

The protein localises to the cytoplasm. The catalysed reaction is oxaloacetate + ATP = phosphoenolpyruvate + ADP + CO2. It participates in carbohydrate biosynthesis; gluconeogenesis. In terms of biological role, involved in the gluconeogenesis. Catalyzes the conversion of oxaloacetate (OAA) to phosphoenolpyruvate (PEP) through direct phosphoryl transfer between the nucleoside triphosphate and OAA. In Paracoccus denitrificans (strain Pd 1222), this protein is Phosphoenolpyruvate carboxykinase (ATP).